Here is a 644-residue protein sequence, read N- to C-terminus: MVAAIPQGAAISNTDSKNPPPRDRQDKPQLTANNGGLQRRPRAAKNVPSRYLSPSPSHSTTTTTTTATSTSTSSSSSVILRSSKRYPSPLLSRTTNSASNLVYTPSSLPKRSQSVDRRRPSAVSDTRTEMSAATKMLITSTRSLSVSFQGEAFSFPISKKKETATPVSHRKCTPERRRATPVRDQRENSKPVDQQLWPGASRRGSSESVVPNSLSRSVDSDSDDGRKLGSGFVGRSMLQHSQSSRVSGDGRLNLGFVGGDGMLEMRDENKARQSTHPRLASSVSCDFTASDTDSVSSGSTNGAHECGSGEVSKTRSLPRNGMASTKFWQETNSRLRRMQDPGSPQCSSPSSRISSISSKFSQSKRFSSDSPLTSSPRGMTSPIRGATRPASPSKLWATATSAPARTSSSPSRVRNGVSEQMNAYNRTLPSILCFSADIRRGKIGEDRVMDAHLLRLLYNRDLQWRFANARADSTLMVQRLSAEKILWNAWVSISELRHSVTLKRIKLLLMRQKLKLASILKEQMCYLEEWSLLDRNHSNSLSGATEALKASTLRLPVSGKAVVDIQDLKHAVSSAVDVMHAMVSSIFSLTSKVEEMNSVMAEMVNITGKEEVLLEQCQGFLTRVAAMQVTDCSMKTHIIQLSRL.

Disordered regions lie at residues 1–129 (MVAA…TRTE), 162–252 (ETAT…DGRL), and 290–414 (SDTD…SRVR). The segment covering 53-77 (SPSPSHSTTTTTTTATSTSTSSSSS) has biased composition (low complexity). Residues 91–112 (LSRTTNSASNLVYTPSSLPKRS) show a composition bias toward polar residues. Positions 172–190 (CTPERRRATPVRDQRENSK) are enriched in basic and acidic residues. Polar residues-rich tracts occupy residues 290–302 (SDTD…STNG) and 314–332 (TRSL…QETN). Composition is skewed to low complexity over residues 343-370 (SPQC…SSDS) and 397-412 (ATAT…SPSR). The short motif at 463 to 466 (QWRF) is the QWRF motif element.

This sequence belongs to the QWRF family. As to expression, expressed in young developing tissues, such as seedlings, roots, flowers, buds and young siliques, and to a lesser extent in mature green tissues.

The protein resides in the peroxisome. In terms of biological role, probable microtubule-associated peroxisomal protein required for chloroplast biogenesis and for the formation of the prolamellar body and prothylakoids in etioplasts. Not involved in peroxisomal metabolism, including mobilization of storage compounds during germination, fatty acid beta-oxydation or photorespiration. This chain is Protein SNOWY COTYLEDON 3 (SCO3), found in Arabidopsis thaliana (Mouse-ear cress).